We begin with the raw amino-acid sequence, 661 residues long: uncharacterized protein (661 aa).

Transmembrane regions (helical) follow at residues 37–57 (VFLGLILALMVVVVALTLFLS), 87–107 (INSPAPWIGLVALAMAGAVFI), 120–140 (WLLLGVLLSLLFVVNGLNVIL), 158–178 (VFWQFLWIYGIVIVVAIPIIV), 243–263 (LLDILDSILTLISFTAILYTI), 266–286 (TLMWGLIGYAVFGTVVAIAIG), and 341–361 (FNLLIIWQALISLFQLGYNYF). The 288-residue stretch at 123-410 (LGVLLSLLFV…VTNQIQNITE (288 aa)) folds into the ABC transmembrane type-1 domain. The ABC transporter domain maps to 453-659 (VALENVTLSP…AEGRWQISPI (207 aa)). Residue 487 to 494 (GPSGSGKS) coordinates ATP.

The protein belongs to the ABC transporter superfamily.

Its subcellular location is the cell inner membrane. This is an uncharacterized protein from Synechocystis sp. (strain ATCC 27184 / PCC 6803 / Kazusa).